The primary structure comprises 107 residues: Thioredoxin (107 aa).

Residues Ser2–Ser107 form the Thioredoxin domain. Active-site nucleophile residues include Cys31 and Cys34. Cys31 and Cys34 form a disulfide bridge.

It belongs to the thioredoxin family.

It localises to the plastid. It is found in the chloroplast. Its function is as follows. Participates in various redox reactions through the reversible oxidation of its active center dithiol to a disulfide and catalyzes dithiol-disulfide exchange reactions. In Porphyra purpurea (Red seaweed), this protein is Thioredoxin (trxA).